We begin with the raw amino-acid sequence, 754 residues long: 5-methyltetrahydropteroyltriglutamate--homocysteine methyltransferase (754 aa).

Residues 15–18 (RELK) and K114 each bind 5-methyltetrahydropteroyltri-L-glutamate. L-homocysteine contacts are provided by residues 430–432 (IGS) and E483. Residues 430–432 (IGS) and E483 each bind L-methionine. 5-methyltetrahydropteroyltri-L-glutamate is bound by residues 514–515 (RC) and W560. Residue D598 coordinates L-homocysteine. D598 contributes to the L-methionine binding site. Residue E604 participates in 5-methyltetrahydropteroyltri-L-glutamate binding. H641, C643, and E665 together coordinate Zn(2+). Catalysis depends on H694, which acts as the Proton donor. C726 provides a ligand contact to Zn(2+).

The protein belongs to the vitamin-B12 independent methionine synthase family. Requires Zn(2+) as cofactor.

It carries out the reaction 5-methyltetrahydropteroyltri-L-glutamate + L-homocysteine = tetrahydropteroyltri-L-glutamate + L-methionine. Its pathway is amino-acid biosynthesis; L-methionine biosynthesis via de novo pathway; L-methionine from L-homocysteine (MetE route): step 1/1. Its function is as follows. Catalyzes the transfer of a methyl group from 5-methyltetrahydrofolate to homocysteine resulting in methionine formation. The chain is 5-methyltetrahydropteroyltriglutamate--homocysteine methyltransferase from Campylobacter jejuni (strain RM1221).